Consider the following 258-residue polypeptide: Trans-aconitate 2-methyltransferase (258 aa).

It belongs to the methyltransferase superfamily. Tam family.

The protein localises to the cytoplasm. It catalyses the reaction trans-aconitate + S-adenosyl-L-methionine = (E)-3-(methoxycarbonyl)pent-2-enedioate + S-adenosyl-L-homocysteine. Catalyzes the S-adenosylmethionine monomethyl esterification of trans-aconitate. The sequence is that of Trans-aconitate 2-methyltransferase from Yersinia pestis bv. Antiqua (strain Antiqua).